The chain runs to 395 residues: ETS-related transcription factor Elf-3 (395 aa).

Residues Glu-69–Ser-155 form the PNT domain. The segment covering Ala-200–Asp-240 has biased composition (low complexity). A disordered region spans residues Ala-200–Arg-275. Over residues Thr-246 to Lys-265 the composition is skewed to basic and acidic residues. Residues His-266 to Arg-275 are compositionally biased toward basic residues. The segment at residues Thr-297–Gly-379 is a DNA-binding region (ETS).

This sequence belongs to the ETS family. As to quaternary structure, interacts with TBP. Interacts with CREBBP and EP300; these act as transcriptional coactivators of ELF3 and positively modulate its function. Interacts with XRCC5/KU86 and XRCC6/KU70; these inhibit the ability of ELF3 to bind DNA and negatively modulate its transcriptional activity. Associated with CLND7 and POU2F3. Interacts with ZNF768.

The protein resides in the cytoplasm. It localises to the nucleus. In terms of biological role, transcriptional activator that binds and transactivates ETS sequences containing the consensus nucleotide core sequence GGA[AT]. Acts synergistically with POU2F3 to transactivate the SPRR2A promoter and with RUNX1 to transactivate the ANGPT1 promoter. Also transactivates collagenase, CCL20, CLND7, FLG, KRT8, NOS2, PTGS2, SPRR2B, TGFBR2 and TGM3 promoters. Represses KRT4 promoter activity. Involved in mediating vascular inflammation. May play an important role in epithelial cell differentiation and tumorigenesis. May be a critical downstream effector of the ERBB2 signaling pathway. May be associated with mammary gland development and involution. Plays an important role in the regulation of transcription with TATA-less promoters in preimplantation embryos, which is essential in preimplantation development. The sequence is that of ETS-related transcription factor Elf-3 from Rattus norvegicus (Rat).